The sequence spans 200 residues: 3-isopropylmalate dehydratase small subunit (200 aa).

Belongs to the LeuD family. LeuD type 1 subfamily. Heterodimer of LeuC and LeuD.

It carries out the reaction (2R,3S)-3-isopropylmalate = (2S)-2-isopropylmalate. It participates in amino-acid biosynthesis; L-leucine biosynthesis; L-leucine from 3-methyl-2-oxobutanoate: step 2/4. Functionally, catalyzes the isomerization between 2-isopropylmalate and 3-isopropylmalate, via the formation of 2-isopropylmaleate. The chain is 3-isopropylmalate dehydratase small subunit from Aliivibrio salmonicida (strain LFI1238) (Vibrio salmonicida (strain LFI1238)).